The sequence spans 468 residues: Proline--tRNA ligase (468 aa).

This sequence belongs to the class-II aminoacyl-tRNA synthetase family. ProS type 3 subfamily. As to quaternary structure, homodimer.

The protein localises to the cytoplasm. It catalyses the reaction tRNA(Pro) + L-proline + ATP = L-prolyl-tRNA(Pro) + AMP + diphosphate. In terms of biological role, catalyzes the attachment of proline to tRNA(Pro) in a two-step reaction: proline is first activated by ATP to form Pro-AMP and then transferred to the acceptor end of tRNA(Pro). The sequence is that of Proline--tRNA ligase from Frankia casuarinae (strain DSM 45818 / CECT 9043 / HFP020203 / CcI3).